A 152-amino-acid chain; its full sequence is Transcriptional regulator MraZ (152 aa).

SpoVT-AbrB domains lie at 5 to 52 (ASAI…PIQE) and 81 to 124 (AHEC…DEAA).

This sequence belongs to the MraZ family. In terms of assembly, forms oligomers.

It localises to the cytoplasm. The protein resides in the nucleoid. This Shewanella halifaxensis (strain HAW-EB4) protein is Transcriptional regulator MraZ.